The primary structure comprises 156 residues: MWKRIDHQLKIKAGDGPQAGQFKELGPGREPAVPHPLSLSEFQTVPVFEDISQHVKEVGSQLVKKVNAIFQLDITKDGKTVHQWTIDLKNGSGDTYRGPARLPADTVFTIPEPVFMELILGKMNPQKAFLAGKFKVSGKVLLGQKLERVFKDWAKW.

The region spanning 44–156 is the SCP2 domain; that stretch reads TVPVFEDISQ…ERVFKDWAKW (113 aa).

This chain is SCP2 sterol-binding domain-containing protein 1 (SCP2D1), found in Bos taurus (Bovine).